The chain runs to 455 residues: Phosphomethylpyrimidine synthase (455 aa).

Substrate-binding positions include N80, M109, Y139, H175, 195–197 (SRG), 236–239 (DSLR), and E275. Position 279 (H279) interacts with Zn(2+). Y302 is a binding site for substrate. H343 provides a ligand contact to Zn(2+). C423, C426, and C431 together coordinate [4Fe-4S] cluster.

This sequence belongs to the ThiC family. [4Fe-4S] cluster serves as cofactor.

It catalyses the reaction 5-amino-1-(5-phospho-beta-D-ribosyl)imidazole + S-adenosyl-L-methionine = 4-amino-2-methyl-5-(phosphooxymethyl)pyrimidine + CO + 5'-deoxyadenosine + formate + L-methionine + 3 H(+). Its pathway is cofactor biosynthesis; thiamine diphosphate biosynthesis. Its function is as follows. Catalyzes the synthesis of the hydroxymethylpyrimidine phosphate (HMP-P) moiety of thiamine from aminoimidazole ribotide (AIR) in a radical S-adenosyl-L-methionine (SAM)-dependent reaction. This is Phosphomethylpyrimidine synthase from Synechococcus sp. (strain JA-2-3B'a(2-13)) (Cyanobacteria bacterium Yellowstone B-Prime).